Consider the following 114-residue polypeptide: Gene 37 protein (114 aa).

The polypeptide is Gene 37 protein (37) (Mycobacterium (Mycobacteriophage L5)).